We begin with the raw amino-acid sequence, 178 residues long: Cytochrome b6-f complex iron-sulfur subunit 1 (178 aa).

A helical membrane pass occupies residues 17-36; that stretch reads LLNFLAGTTVAVTASAGAYA. The region spanning 61 to 161 is the Rieske domain; that stretch reads GNPIPASQIL…VAVVDDQIFI (101 aa). [2Fe-2S] cluster is bound by residues cysteine 107, histidine 109, cysteine 125, and histidine 128. A disulfide bridge links cysteine 112 with cysteine 127.

Belongs to the Rieske iron-sulfur protein family. As to quaternary structure, the 4 large subunits of the cytochrome b6-f complex are cytochrome b6, subunit IV (17 kDa polypeptide, PetD), cytochrome f and the Rieske protein, while the 4 small subunits are PetG, PetL, PetM and PetN. The complex functions as a dimer. Requires [2Fe-2S] cluster as cofactor.

The protein localises to the cellular thylakoid membrane. The catalysed reaction is 2 oxidized [plastocyanin] + a plastoquinol + 2 H(+)(in) = 2 reduced [plastocyanin] + a plastoquinone + 4 H(+)(out). Component of the cytochrome b6-f complex, which mediates electron transfer between photosystem II (PSII) and photosystem I (PSI), cyclic electron flow around PSI, and state transitions. The polypeptide is Cytochrome b6-f complex iron-sulfur subunit 1 (Synechocystis sp. (strain ATCC 27184 / PCC 6803 / Kazusa)).